The primary structure comprises 350 residues: Phenylalanine--tRNA ligase alpha subunit (350 aa).

Glu257 contacts Mg(2+).

This sequence belongs to the class-II aminoacyl-tRNA synthetase family. Phe-tRNA synthetase alpha subunit type 1 subfamily. As to quaternary structure, tetramer of two alpha and two beta subunits. The cofactor is Mg(2+).

The protein resides in the cytoplasm. The enzyme catalyses tRNA(Phe) + L-phenylalanine + ATP = L-phenylalanyl-tRNA(Phe) + AMP + diphosphate + H(+). The chain is Phenylalanine--tRNA ligase alpha subunit from Listeria welshimeri serovar 6b (strain ATCC 35897 / DSM 20650 / CCUG 15529 / CIP 8149 / NCTC 11857 / SLCC 5334 / V8).